The chain runs to 353 residues: Photosystem II protein D1 (353 aa).

T2 bears the N-acetylthreonine mark. Phosphothreonine is present on T2. The next 3 helical transmembrane spans lie at 29 to 46 (YIGW…TATS), 118 to 133 (HFLL…EWEL), and 142 to 156 (WIAV…AATA). H118 provides a ligand contact to chlorophyll a. A pheophytin a-binding site is contributed by Y126. Residues D170 and E189 each coordinate [CaMn4O5] cluster. A helical membrane pass occupies residues 197–218 (FHMLGVAGVFGGSLFSAMHGSL). H198 contacts chlorophyll a. A quinone is bound by residues H215 and 264–265 (SF). H215 is a binding site for Fe cation. Residue H272 participates in Fe cation binding. A helical transmembrane segment spans residues 274-288 (FLAAWPVVGIWFTAL). H332, E333, D342, and A344 together coordinate [CaMn4O5] cluster. Residues 345–353 (AVEAPSING) constitute a propeptide that is removed on maturation.

It belongs to the reaction center PufL/M/PsbA/D family. In terms of assembly, PSII is composed of 1 copy each of membrane proteins PsbA, PsbB, PsbC, PsbD, PsbE, PsbF, PsbH, PsbI, PsbJ, PsbK, PsbL, PsbM, PsbT, PsbX, PsbY, PsbZ, Psb30/Ycf12, at least 3 peripheral proteins of the oxygen-evolving complex and a large number of cofactors. It forms dimeric complexes. It depends on The D1/D2 heterodimer binds P680, chlorophylls that are the primary electron donor of PSII, and subsequent electron acceptors. It shares a non-heme iron and each subunit binds pheophytin, quinone, additional chlorophylls, carotenoids and lipids. D1 provides most of the ligands for the Mn4-Ca-O5 cluster of the oxygen-evolving complex (OEC). There is also a Cl(-1) ion associated with D1 and D2, which is required for oxygen evolution. The PSII complex binds additional chlorophylls, carotenoids and specific lipids. as a cofactor. Tyr-161 forms a radical intermediate that is referred to as redox-active TyrZ, YZ or Y-Z. In terms of processing, C-terminally processed by CTPA; processing is essential to allow assembly of the oxygen-evolving complex and thus photosynthetic growth.

The protein localises to the plastid. It localises to the chloroplast thylakoid membrane. The catalysed reaction is 2 a plastoquinone + 4 hnu + 2 H2O = 2 a plastoquinol + O2. Its function is as follows. This is one of the two reaction center proteins of photosystem II. In terms of biological role, photosystem II (PSII) is a light-driven water:plastoquinone oxidoreductase that uses light energy to abstract electrons from H(2)O, generating O(2) and a proton gradient subsequently used for ATP formation. It consists of a core antenna complex that captures photons, and an electron transfer chain that converts photonic excitation into a charge separation. The D1/D2 (PsbA/PsbD) reaction center heterodimer binds P680, the primary electron donor of PSII as well as several subsequent electron acceptors. The chain is Photosystem II protein D1 from Pisum sativum (Garden pea).